The following is a 145-amino-acid chain: uncharacterized protein (145 aa).

It belongs to the asfivirus K145R family.

The protein resides in the virion. This is an uncharacterized protein from Ornithodoros (relapsing fever ticks).